The chain runs to 362 residues: Atypical chemokine receptor 3 (362 aa).

The Extracellular portion of the chain corresponds to 1-40; sequence MDLHLFDYSEPGNFSDISWPCNSSDCIVVDTVMCPNMPNK. Asn13, Asn22, and Asn39 each carry an N-linked (GlcNAc...) asparagine glycan. The helical transmembrane segment at 41-61 threads the bilayer; the sequence is SVLLYTLSFIYIFIFVIGMIA. The Cytoplasmic portion of the chain corresponds to 62–81; it reads NSVVVWVNIQAKTTGYDTHC. The helical transmembrane segment at 82–102 threads the bilayer; it reads YILNLAIADLWVVLTIPVWVV. The Extracellular portion of the chain corresponds to 103-118; sequence SLVQHNQWPMGELTCK. An intrachain disulfide couples Cys117 to Cys196. A helical membrane pass occupies residues 119 to 139; the sequence is VTHLIFSINLFGSIFFLTCMS. Topologically, residues 140 to 162 are cytoplasmic; that stretch reads VDRYLSITYFTNTPSSRKKMVRR. Residues 163-183 form a helical membrane-spanning segment; sequence VVCILVWLLAFCVSLPDTYYL. Residues 184-213 are Extracellular-facing; that stretch reads KTVTSASNNETYCRSFYPEHSIKEWLIGME. A helical transmembrane segment spans residues 214–234; sequence LVSVVLGFAVPFSIIAVFYFL. Topologically, residues 235 to 252 are cytoplasmic; it reads LARAISASSDQEKHSSRK. Residues 253–273 form a helical membrane-spanning segment; the sequence is IIFSYVVVFLVCWLPYHVAVL. At 274-296 the chain is on the extracellular side; sequence LDIFSILHYIPFTCRLEHALFTA. The helical transmembrane segment at 297 to 319 threads the bilayer; that stretch reads LHVTQCLSLVHCCVNPVLYSFIN. At 320 to 362 the chain is on the cytoplasmic side; it reads RNYRYELMKAFIFKYSAKTGLTKLIDASRVSETEYSALEQSTK. The segment at 324–362 is C-terminal cytoplasmic tail; sequence YELMKAFIFKYSAKTGLTKLIDASRVSETEYSALEQSTK. Ser347, Ser350, and Ser355 each carry phosphoserine.

Belongs to the G-protein coupled receptor 1 family. Atypical chemokine receptor subfamily. In terms of assembly, homodimer. Can form heterodimers with CXCR4; heterodimerization may regulate CXCR4 signaling activity. Interacts with ARRB1 and ARRB2. Post-translationally, the Ser/Thr residues in the C-terminal cytoplasmic tail may be phosphorylated. In terms of processing, ubiquitinated at the Lys residues in its C-terminal cytoplasmic tail and is essential for correct trafficking from and to the cell membrane. Deubiquitinated by CXCL12-stimulation in a reversible manner. As to expression, expressed in monocytes, basophils, B-cells, umbilical vein endothelial cells (HUVEC) and B-lymphoblastoid cells. Lower expression detected in CD4+ T-lymphocytes and natural killer cells. In the brain, detected in endothelial cells and capillaries, and in mature neurons of the frontal cortex and hippocampus. Expressed in tubular formation in the kidney. Highly expressed in astroglial tumor endothelial, microglial and glioma cells. Expressed at low levels in normal CD34+ progenitor cells, but at very high levels in several myeloid malignant cell lines. Expressed in breast carcinomas but not in normal breast tissue (at protein level).

The protein localises to the cell membrane. It is found in the early endosome. It localises to the recycling endosome. In terms of biological role, atypical chemokine receptor that controls chemokine levels and localization via high-affinity chemokine binding that is uncoupled from classic ligand-driven signal transduction cascades, resulting instead in chemokine sequestration, degradation, or transcytosis. Also known as interceptor (internalizing receptor) or chemokine-scavenging receptor or chemokine decoy receptor. Acts as a receptor for chemokines CXCL11 and CXCL12/SDF1. Chemokine binding does not activate G-protein-mediated signal transduction but instead induces beta-arrestin recruitment, leading to ligand internalization and activation of MAPK signaling pathway. Required for regulation of CXCR4 protein levels in migrating interneurons, thereby adapting their chemokine responsiveness. In glioma cells, transduces signals via MEK/ERK pathway, mediating resistance to apoptosis. Promotes cell growth and survival. Not involved in cell migration, adhesion or proliferation of normal hematopoietic progenitors but activated by CXCL11 in malignant hemapoietic cells, leading to phosphorylation of ERK1/2 (MAPK3/MAPK1) and enhanced cell adhesion and migration. Plays a regulatory role in CXCR4-mediated activation of cell surface integrins by CXCL12. Required for heart valve development. Regulates axon guidance in the oculomotor system through the regulation of CXCL12 levels. Its function is as follows. (Microbial infection) Acts as a coreceptor with CXCR4 for a restricted number of HIV isolates. This is Atypical chemokine receptor 3 from Homo sapiens (Human).